The sequence spans 196 residues: Charged multivesicular body protein 1a (196 aa).

The stretch at 5–41 forms a coiled coil; the sequence is LFQLKFTAKQLEKLAKKAEKDSNTEQAKVKKALQQKN. The span at 170-181 shows a compositional bias: polar residues; the sequence is QGASSVGESSTR. Residues 170–196 are disordered; it reads QGASSVGESSTRTQEDQLSRRLASLRN. Residues 185 to 195 carry the MIT-interacting motif motif; the sequence is DQLSRRLASLR.

The protein belongs to the SNF7 family. As to quaternary structure, probable peripherally associated component of the endosomal sorting required for transport complex III (ESCRT-III).

Its subcellular location is the cytoplasm. The protein resides in the endosome membrane. Functionally, probable peripherally associated component of the endosomal sorting required for transport complex III (ESCRT-III) which is involved in multivesicular bodies (MVBs) formation and sorting of endosomal cargo proteins into MVBs. MVBs contain intraluminal vesicles (ILVs) that are generated by invagination and scission from the limiting membrane of the endosome and mostly are delivered to lysosomes enabling degradation of membrane proteins, such as stimulated growth factor receptors, lysosomal enzymes and lipids. This is Charged multivesicular body protein 1a (chmp1a) from Xenopus laevis (African clawed frog).